Here is a 425-residue protein sequence, read N- to C-terminus: Serine--tRNA ligase (425 aa).

230-232 (TAE) serves as a coordination point for L-serine. Residue 261–263 (RSE) participates in ATP binding. L-serine is bound at residue E284. 348–351 (EISS) is a binding site for ATP. Residue S384 coordinates L-serine.

Belongs to the class-II aminoacyl-tRNA synthetase family. Type-1 seryl-tRNA synthetase subfamily. In terms of assembly, homodimer. The tRNA molecule binds across the dimer.

The protein localises to the cytoplasm. The catalysed reaction is tRNA(Ser) + L-serine + ATP = L-seryl-tRNA(Ser) + AMP + diphosphate + H(+). It carries out the reaction tRNA(Sec) + L-serine + ATP = L-seryl-tRNA(Sec) + AMP + diphosphate + H(+). Its pathway is aminoacyl-tRNA biosynthesis; selenocysteinyl-tRNA(Sec) biosynthesis; L-seryl-tRNA(Sec) from L-serine and tRNA(Sec): step 1/1. Functionally, catalyzes the attachment of serine to tRNA(Ser). Is also able to aminoacylate tRNA(Sec) with serine, to form the misacylated tRNA L-seryl-tRNA(Sec), which will be further converted into selenocysteinyl-tRNA(Sec). The protein is Serine--tRNA ligase of Streptococcus pyogenes serotype M6 (strain ATCC BAA-946 / MGAS10394).